Here is a 307-residue protein sequence, read N- to C-terminus: UDP-N-acetylenolpyruvoylglucosamine reductase (307 aa).

One can recognise an FAD-binding PCMH-type domain in the interval 34 to 197; that stretch reads VGGNAEALFR…LSASLKGRPG (164 aa). R177 is a catalytic residue. S226 serves as the catalytic Proton donor. Residue E296 is part of the active site.

Belongs to the MurB family. Requires FAD as cofactor.

It localises to the cytoplasm. It catalyses the reaction UDP-N-acetyl-alpha-D-muramate + NADP(+) = UDP-N-acetyl-3-O-(1-carboxyvinyl)-alpha-D-glucosamine + NADPH + H(+). Its pathway is cell wall biogenesis; peptidoglycan biosynthesis. Cell wall formation. In Paramagnetospirillum magneticum (strain ATCC 700264 / AMB-1) (Magnetospirillum magneticum), this protein is UDP-N-acetylenolpyruvoylglucosamine reductase.